An 88-amino-acid chain; its full sequence is Small ribosomal subunit protein bS16c (88 aa).

Belongs to the bacterial ribosomal protein bS16 family.

The protein resides in the plastid. The protein localises to the chloroplast. The polypeptide is Small ribosomal subunit protein bS16c (Coffea arabica (Arabian coffee)).